Reading from the N-terminus, the 264-residue chain is Small ribosomal subunit protein uS3 (264 aa).

The region spanning 39–107 (VREFLKKKLK…PVHVNIEEIR (69 aa)) is the KH type-2 domain. Residues 211-264 (NDAPVVEEPQEERRKRPGRPEGRRREGEGRPGGQRRGAGAGGRRSGGADAKTGE) are disordered. Residues 221–239 (EERRKRPGRPEGRRREGEG) are compositionally biased toward basic and acidic residues. Positions 240–255 (RPGGQRRGAGAGGRRS) are enriched in gly residues.

It belongs to the universal ribosomal protein uS3 family. Part of the 30S ribosomal subunit. Forms a tight complex with proteins S10 and S14.

Functionally, binds the lower part of the 30S subunit head. Binds mRNA in the 70S ribosome, positioning it for translation. In Ralstonia nicotianae (strain ATCC BAA-1114 / GMI1000) (Ralstonia solanacearum), this protein is Small ribosomal subunit protein uS3.